Consider the following 417-residue polypeptide: NADH-quinone oxidoreductase subunit D (417 aa).

This sequence belongs to the complex I 49 kDa subunit family. In terms of assembly, NDH-1 is composed of 14 different subunits. Subunits NuoB, C, D, E, F, and G constitute the peripheral sector of the complex.

Its subcellular location is the cell inner membrane. The catalysed reaction is a quinone + NADH + 5 H(+)(in) = a quinol + NAD(+) + 4 H(+)(out). Functionally, NDH-1 shuttles electrons from NADH, via FMN and iron-sulfur (Fe-S) centers, to quinones in the respiratory chain. The immediate electron acceptor for the enzyme in this species is believed to be ubiquinone. Couples the redox reaction to proton translocation (for every two electrons transferred, four hydrogen ions are translocated across the cytoplasmic membrane), and thus conserves the redox energy in a proton gradient. This chain is NADH-quinone oxidoreductase subunit D, found in Acidithiobacillus ferrooxidans (strain ATCC 53993 / BNL-5-31) (Leptospirillum ferrooxidans (ATCC 53993)).